Consider the following 97-residue polypeptide: Peptide YY-A (97 aa).

Residues 1–28 form the signal peptide; it reads MAVMLKPWTVVATVLICVLLCLGTFVDA. A Tyrosine amide modification is found at Tyr64. Residues 68–97 constitute a propeptide, C-terminal extension; it reads STSEDVMAELLFGDDTEHKQRSRYDDSFMW.

It belongs to the NPY family. In terms of tissue distribution, mainly expressed in brainstem neurons, and in the telencephalon. Also expressed in intestinal endocrine cells.

The protein localises to the secreted. The chain is Peptide YY-A (pyya) from Danio rerio (Zebrafish).